A 288-amino-acid chain; its full sequence is Acetyl-coenzyme A carboxylase carboxyl transferase subunit beta (288 aa).

Positions 34–288 constitute a CoA carboxyltransferase N-terminal domain; sequence LFAKCPACKH…HLVAFHGGVS (255 aa). Residues Cys-38, Cys-41, Cys-56, and Cys-59 each contribute to the Zn(2+) site. A C4-type zinc finger spans residues 38–59; it reads CPACKHMIYQKDLGPAKICPTC.

This sequence belongs to the AccD/PCCB family. In terms of assembly, acetyl-CoA carboxylase is a heterohexamer composed of biotin carboxyl carrier protein (AccB), biotin carboxylase (AccC) and two subunits each of ACCase subunit alpha (AccA) and ACCase subunit beta (AccD). It depends on Zn(2+) as a cofactor.

It localises to the cytoplasm. The catalysed reaction is N(6)-carboxybiotinyl-L-lysyl-[protein] + acetyl-CoA = N(6)-biotinyl-L-lysyl-[protein] + malonyl-CoA. It functions in the pathway lipid metabolism; malonyl-CoA biosynthesis; malonyl-CoA from acetyl-CoA: step 1/1. Its function is as follows. Component of the acetyl coenzyme A carboxylase (ACC) complex. Biotin carboxylase (BC) catalyzes the carboxylation of biotin on its carrier protein (BCCP) and then the CO(2) group is transferred by the transcarboxylase to acetyl-CoA to form malonyl-CoA. This is Acetyl-coenzyme A carboxylase carboxyl transferase subunit beta from Streptococcus equi subsp. zooepidemicus (strain MGCS10565).